The chain runs to 354 residues: Bacteriochlorophyll a protein (354 aa).

Residues His-99, His-134, His-278, His-285, and His-286 each contribute to the bacteriochlorophyll a site.

As to quaternary structure, homotrimer. Each subunit contains 7 molecules of bacteriochlorophyll a.

In terms of biological role, intermediary in the transfer of excitation energy from the chlorophyll to the reaction centers. This Chlorobaculum thiosulfatiphilum (Chlorobium limicola f.sp. thiosulfatophilum) protein is Bacteriochlorophyll a protein (fmoA).